We begin with the raw amino-acid sequence, 371 residues long: Protein-glutamate methylesterase/protein-glutamine glutaminase 3 (371 aa).

One can recognise a Response regulatory domain in the interval 5–120; it reads RVVVIDDSAY…SEEILTIRED (116 aa). Aspartate 56 bears the 4-aspartylphosphate mark. In terms of domain architecture, CheB-type methylesterase spans 174–362; it reads PAGRLEVVAI…LDRMSREIIQ (189 aa). Active-site residues include serine 186, histidine 213, and aspartate 309.

It belongs to the CheB family. Phosphorylated by CheA. Phosphorylation of the N-terminal regulatory domain activates the methylesterase activity.

The protein resides in the cytoplasm. It catalyses the reaction [protein]-L-glutamate 5-O-methyl ester + H2O = L-glutamyl-[protein] + methanol + H(+). It carries out the reaction L-glutaminyl-[protein] + H2O = L-glutamyl-[protein] + NH4(+). In terms of biological role, involved in chemotaxis. Part of a chemotaxis signal transduction system that modulates chemotaxis in response to various stimuli. Catalyzes the demethylation of specific methylglutamate residues introduced into the chemoreceptors (methyl-accepting chemotaxis proteins or MCP) by CheR. Also mediates the irreversible deamidation of specific glutamine residues to glutamic acid. The protein is Protein-glutamate methylesterase/protein-glutamine glutaminase 3 of Geobacter sulfurreducens (strain ATCC 51573 / DSM 12127 / PCA).